Consider the following 337-residue polypeptide: Monoacylglycerol lipase ABHD6 (337 aa).

At methionine 1 to methionine 8 the chain is on the extracellular side. A helical; Signal-anchor for type II membrane protein transmembrane segment spans residues phenylalanine 9–leucine 29. The Cytoplasmic segment spans residues tryptophan 30–asparagine 337. The active-site Nucleophile is the serine 148. Catalysis depends on charge relay system residues aspartate 278 and histidine 306.

The protein belongs to the AB hydrolase superfamily.

It is found in the late endosome membrane. It localises to the lysosome membrane. Its subcellular location is the mitochondrion membrane. It catalyses the reaction Hydrolyzes glycerol monoesters of long-chain fatty acids.. It carries out the reaction 1-octanoylglycerol + H2O = octanoate + glycerol + H(+). The enzyme catalyses 1-decanoylglycerol + H2O = decanoate + glycerol + H(+). The catalysed reaction is 1-dodecanoylglycerol + H2O = dodecanoate + glycerol + H(+). It catalyses the reaction 1-tetradecanoylglycerol + H2O = tetradecanoate + glycerol + H(+). It carries out the reaction 2-hexadecanoylglycerol + H2O = glycerol + hexadecanoate + H(+). The enzyme catalyses 2-(9Z-octadecenoyl)-glycerol + H2O = glycerol + (9Z)-octadecenoate + H(+). The catalysed reaction is 1-(9Z-octadecenoyl)-glycerol + H2O = glycerol + (9Z)-octadecenoate + H(+). It catalyses the reaction 2-(9Z,12Z-octadecadienoyl)-glycerol + H2O = (9Z,12Z)-octadecadienoate + glycerol + H(+). It carries out the reaction 2-(5Z,8Z,11Z,14Z-eicosatetraenoyl)-glycerol + H2O = glycerol + (5Z,8Z,11Z,14Z)-eicosatetraenoate + H(+). The enzyme catalyses 1-(5Z,8Z,11Z,14Z-eicosatetraenoyl)-glycerol + H2O = glycerol + (5Z,8Z,11Z,14Z)-eicosatetraenoate + H(+). The catalysed reaction is 1-(9Z,12Z-octadecadienoyl)-glycerol + H2O = (9Z,12Z)-octadecadienoate + glycerol + H(+). It catalyses the reaction 3-(9Z-octadecenoyl)-sn-glycero-1-phospho-(3'-(9Z-octadecenoyl)-1'-sn-glycerol) + H2O = 3-(9Z-octadecenoyl)-sn-glycero-1-phospho-(1'-sn-glycerol) + (9Z)-octadecenoate + H(+). It carries out the reaction (S,S)-2-(9Z-octadecenoyl)-sn-glycero-1-phospho-(2'-(9Z-octadecenoyl)-1'-sn-glycerol) + H2O = (S,S)-2-(9Z-octadecenoyl)-sn-glycero-1-phospho-(1'-sn-glycerol) + (9Z)-octadecenoate + H(+). The enzyme catalyses (R,R)-2-(9Z-octadecenoyl)-sn-glycero-3-phospho-(2'-(9Z-octadecenoyl)-3'-sn-glycerol) + H2O = (R,R)-2-(9Z-octadecenoyl)-sn-glycero-3-phospho-(3'-sn-glycerol) + (9Z)-octadecenoate + H(+). In terms of biological role, lipase that preferentially hydrolysis medium-chain saturated monoacylglycerols including 2-arachidonoylglycerol. Through 2-arachidonoylglycerol degradation may regulate endocannabinoid signaling pathways. Also has a lysophosphatidyl lipase activity with a preference for lysophosphatidylglycerol among other lysophospholipids. Also able to degrade bis(monoacylglycero)phosphate (BMP) and constitutes the major enzyme for BMP catabolism. BMP, also known as lysobisphosphatidic acid, is enriched in late endosomes and lysosomes and plays a key role in the formation of intraluminal vesicles and in lipid sorting. The chain is Monoacylglycerol lipase ABHD6 from Rattus norvegicus (Rat).